A 364-amino-acid polypeptide reads, in one-letter code: Protein-glutamate methylesterase/protein-glutamine glutaminase (364 aa).

The Response regulatory domain occupies arginine 5 to asparagine 123. Aspartate 56 carries the 4-aspartylphosphate modification. Residues glutamate 174–tyrosine 364 form the CheB-type methylesterase domain. Catalysis depends on residues serine 181, histidine 208, and aspartate 306.

It belongs to the CheB family. Phosphorylated by CheA. Phosphorylation of the N-terminal regulatory domain activates the methylesterase activity.

The protein localises to the cytoplasm. The catalysed reaction is [protein]-L-glutamate 5-O-methyl ester + H2O = L-glutamyl-[protein] + methanol + H(+). The enzyme catalyses L-glutaminyl-[protein] + H2O = L-glutamyl-[protein] + NH4(+). Its function is as follows. Involved in chemotaxis. Part of a chemotaxis signal transduction system that modulates chemotaxis in response to various stimuli. Catalyzes the demethylation of specific methylglutamate residues introduced into the chemoreceptors (methyl-accepting chemotaxis proteins or MCP) by CheR. Also mediates the irreversible deamidation of specific glutamine residues to glutamic acid. The protein is Protein-glutamate methylesterase/protein-glutamine glutaminase of Desulfotalea psychrophila (strain LSv54 / DSM 12343).